We begin with the raw amino-acid sequence, 359 residues long: Peptide chain release factor 1 (359 aa).

Gln-235 bears the N5-methylglutamine mark. Residues 283 to 294 show a composition bias toward basic and acidic residues; it reads SKADEERSESRK. The segment at 283-309 is disordered; that stretch reads SKADEERSESRKSQVGSGDRSERIRTY.

Belongs to the prokaryotic/mitochondrial release factor family. Methylated by PrmC. Methylation increases the termination efficiency of RF1.

The protein resides in the cytoplasm. In terms of biological role, peptide chain release factor 1 directs the termination of translation in response to the peptide chain termination codons UAG and UAA. In Mesorhizobium japonicum (strain LMG 29417 / CECT 9101 / MAFF 303099) (Mesorhizobium loti (strain MAFF 303099)), this protein is Peptide chain release factor 1.